The sequence spans 668 residues: UvrABC system protein B (668 aa).

The Helicase ATP-binding domain occupies R25–G414. G38–T45 contributes to the ATP binding site. The short motif at Y91–I114 is the Beta-hairpin element. Positions D431 to L594 constitute a Helicase C-terminal domain. The 36-residue stretch at K627 to Q662 folds into the UVR domain.

This sequence belongs to the UvrB family. In terms of assembly, forms a heterotetramer with UvrA during the search for lesions. Interacts with UvrC in an incision complex.

It localises to the cytoplasm. Functionally, the UvrABC repair system catalyzes the recognition and processing of DNA lesions. A damage recognition complex composed of 2 UvrA and 2 UvrB subunits scans DNA for abnormalities. Upon binding of the UvrA(2)B(2) complex to a putative damaged site, the DNA wraps around one UvrB monomer. DNA wrap is dependent on ATP binding by UvrB and probably causes local melting of the DNA helix, facilitating insertion of UvrB beta-hairpin between the DNA strands. Then UvrB probes one DNA strand for the presence of a lesion. If a lesion is found the UvrA subunits dissociate and the UvrB-DNA preincision complex is formed. This complex is subsequently bound by UvrC and the second UvrB is released. If no lesion is found, the DNA wraps around the other UvrB subunit that will check the other stand for damage. The chain is UvrABC system protein B from Treponema pallidum (strain Nichols).